Here is a 154-residue protein sequence, read N- to C-terminus: Large ribosomal subunit protein uL13 (154 aa).

It belongs to the universal ribosomal protein uL13 family. Part of the 50S ribosomal subunit.

In terms of biological role, this protein is one of the early assembly proteins of the 50S ribosomal subunit, although it is not seen to bind rRNA by itself. It is important during the early stages of 50S assembly. In Bradyrhizobium sp. (strain BTAi1 / ATCC BAA-1182), this protein is Large ribosomal subunit protein uL13.